We begin with the raw amino-acid sequence, 742 residues long: Serine/threonine-protein kinase SKY1 (742 aa).

The interval 13–146 (KSAHLADTST…KDYRPGGYHP (134 aa)) is disordered. Polar residues predominate over residues 19–35 (DTSTDASISCEEATSSQ). A compositionally biased stretch (low complexity) spans 56 to 73 (TKSKLSLALQTSKSSSSA). The span at 81–101 (TSSKTEDFSTKSIKKKPDSGV) shows a compositional bias: basic and acidic residues. Positions 106–127 (SIQSDSGPQSDSDLDSDSSISS) are enriched in low complexity. The span at 128–140 (CDERNEESLKDYR) shows a compositional bias: basic and acidic residues. The 549-residue stretch at 158–706 (YILVRKLGWG…AGGLVNHPWL (549 aa)) folds into the Protein kinase domain. ATP is bound by residues 164–172 (LGWGHFSTV) and Lys-187. Catalysis depends on Asp-294, which acts as the Proton acceptor. A phosphothreonine mark is found at Thr-383 and Thr-386. A phosphoserine mark is found at Ser-388, Ser-393, Ser-410, Ser-427, Ser-432, Ser-445, Ser-449, and Ser-453. Positions 459–491 (INEDSNDNNNNDNSKNKNNNNNNSNNNNNEDIM) are disordered. Residues 465 to 489 (DNNNNDNSKNKNNNNNNSNNNNNED) show a composition bias toward low complexity.

The protein belongs to the protein kinase superfamily. Ser/Thr protein kinase family.

The enzyme catalyses L-seryl-[protein] + ATP = O-phospho-L-seryl-[protein] + ADP + H(+). It carries out the reaction L-threonyl-[protein] + ATP = O-phospho-L-threonyl-[protein] + ADP + H(+). Its function is as follows. Constitutively active kinase, specifically and sequentially phosphorylates serine/arginine (SR)-type shuttling mRNA binding proteins in their RS dipeptide repeats. The sequence is that of Serine/threonine-protein kinase SKY1 (SKY1) from Saccharomyces cerevisiae (strain ATCC 204508 / S288c) (Baker's yeast).